A 526-amino-acid chain; its full sequence is Maturase K (526 aa).

It belongs to the intron maturase 2 family. MatK subfamily.

It is found in the plastid. The protein localises to the chloroplast. In terms of biological role, usually encoded in the trnK tRNA gene intron. Probably assists in splicing its own and other chloroplast group II introns. The sequence is that of Maturase K from Iris setosa (Hiougi-ayame).